The primary structure comprises 728 residues: Catalase-peroxidase 1 (728 aa).

The signal sequence occupies residues 1-22; sequence MDKTQSSQGKCPVMHGANSAVA. The tryptophyl-tyrosyl-methioninium (Trp-Tyr) (with M-251) cross-link spans 97 to 225; the sequence is WHSAGTYRVA…LAAVMMGLIY (129 aa). The Proton acceptor role is filled by histidine 98. The tryptophyl-tyrosyl-methioninium (Tyr-Met) (with W-97) cross-link spans 225 to 251; that stretch reads YVNPEGVDGKPDPLRTAQDVRVTFARM. Histidine 266 contributes to the heme b binding site.

The protein belongs to the peroxidase family. Peroxidase/catalase subfamily. In terms of assembly, homodimer or homotetramer. Heme b is required as a cofactor. In terms of processing, formation of the three residue Trp-Tyr-Met cross-link is important for the catalase, but not the peroxidase activity of the enzyme.

It carries out the reaction H2O2 + AH2 = A + 2 H2O. The enzyme catalyses 2 H2O2 = O2 + 2 H2O. Its function is as follows. Bifunctional enzyme with both catalase and broad-spectrum peroxidase activity. The protein is Catalase-peroxidase 1 of Shewanella sp. (strain MR-7).